We begin with the raw amino-acid sequence, 252 residues long: Pyridoxine 5'-phosphate synthase (252 aa).

Asparagine 7 lines the 3-amino-2-oxopropyl phosphate pocket. 9–10 (DH) lines the 1-deoxy-D-xylulose 5-phosphate pocket. Residue arginine 18 coordinates 3-amino-2-oxopropyl phosphate. Catalysis depends on histidine 43, which acts as the Proton acceptor. Arginine 45 and histidine 50 together coordinate 1-deoxy-D-xylulose 5-phosphate. Catalysis depends on glutamate 70, which acts as the Proton acceptor. Threonine 100 is a binding site for 1-deoxy-D-xylulose 5-phosphate. The active-site Proton donor is the histidine 190. 3-amino-2-oxopropyl phosphate contacts are provided by residues glycine 191 and 212 to 213 (GH).

The protein belongs to the PNP synthase family. In terms of assembly, homooctamer; tetramer of dimers.

The protein localises to the cytoplasm. It catalyses the reaction 3-amino-2-oxopropyl phosphate + 1-deoxy-D-xylulose 5-phosphate = pyridoxine 5'-phosphate + phosphate + 2 H2O + H(+). The protein operates within cofactor biosynthesis; pyridoxine 5'-phosphate biosynthesis; pyridoxine 5'-phosphate from D-erythrose 4-phosphate: step 5/5. In terms of biological role, catalyzes the complicated ring closure reaction between the two acyclic compounds 1-deoxy-D-xylulose-5-phosphate (DXP) and 3-amino-2-oxopropyl phosphate (1-amino-acetone-3-phosphate or AAP) to form pyridoxine 5'-phosphate (PNP) and inorganic phosphate. The chain is Pyridoxine 5'-phosphate synthase from Synechococcus sp. (strain RCC307).